Consider the following 329-residue polypeptide: UDP-N-acetylenolpyruvoylglucosamine reductase (329 aa).

The FAD-binding PCMH-type domain occupies 28 to 192 (RVGGPADLLC…ARVEVRLHPG (165 aa)). The active site involves Arg-172. The Proton donor role is filled by Ser-221. Glu-291 is an active-site residue. Residues 307-329 (DGHAAAGGGPGAASGGVRPPEAT) form a disordered region. Gly residues predominate over residues 311–320 (AAGGGPGAAS).

The protein belongs to the MurB family. Requires FAD as cofactor.

The protein localises to the cytoplasm. It carries out the reaction UDP-N-acetyl-alpha-D-muramate + NADP(+) = UDP-N-acetyl-3-O-(1-carboxyvinyl)-alpha-D-glucosamine + NADPH + H(+). Its pathway is cell wall biogenesis; peptidoglycan biosynthesis. Cell wall formation. In Anaeromyxobacter dehalogenans (strain 2CP-1 / ATCC BAA-258), this protein is UDP-N-acetylenolpyruvoylglucosamine reductase.